The primary structure comprises 114 residues: MIKNTGHRKLGKTGSHRRAMLNNMATSIILHEQVETTVAKAKEVRRVVDNLVTLAKNGQNLQVKDTLKDKVAYKKLFEVLASRYEKRPGGFTRIYRAGKRPGDNAEVAIIKLVD.

This sequence belongs to the bacterial ribosomal protein bL17 family. In terms of assembly, part of the 50S ribosomal subunit. Contacts protein L32.

This chain is Large ribosomal subunit protein bL17, found in Elusimicrobium minutum (strain Pei191).